A 116-amino-acid polypeptide reads, in one-letter code: Phosphoribosyl-AMP cyclohydrolase (116 aa).

Asp-78 provides a ligand contact to Mg(2+). Residue Cys-79 participates in Zn(2+) binding. Residues Asp-80 and Asp-82 each coordinate Mg(2+). Residues Cys-95 and Cys-102 each contribute to the Zn(2+) site.

Belongs to the PRA-CH family. Homodimer. Requires Mg(2+) as cofactor. Zn(2+) is required as a cofactor.

It localises to the cytoplasm. The catalysed reaction is 1-(5-phospho-beta-D-ribosyl)-5'-AMP + H2O = 1-(5-phospho-beta-D-ribosyl)-5-[(5-phospho-beta-D-ribosylamino)methylideneamino]imidazole-4-carboxamide. It participates in amino-acid biosynthesis; L-histidine biosynthesis; L-histidine from 5-phospho-alpha-D-ribose 1-diphosphate: step 3/9. Its function is as follows. Catalyzes the hydrolysis of the adenine ring of phosphoribosyl-AMP. The polypeptide is Phosphoribosyl-AMP cyclohydrolase (Acidiphilium cryptum (strain JF-5)).